The primary structure comprises 117 residues: Large ribosomal subunit protein uL18 (117 aa).

It belongs to the universal ribosomal protein uL18 family. As to quaternary structure, part of the 50S ribosomal subunit; part of the 5S rRNA/L5/L18/L25 subcomplex. Contacts the 5S and 23S rRNAs.

In terms of biological role, this is one of the proteins that bind and probably mediate the attachment of the 5S RNA into the large ribosomal subunit, where it forms part of the central protuberance. The polypeptide is Large ribosomal subunit protein uL18 (Photorhabdus laumondii subsp. laumondii (strain DSM 15139 / CIP 105565 / TT01) (Photorhabdus luminescens subsp. laumondii)).